Consider the following 83-residue polypeptide: Kappa-theraphotoxin-Cg2a (83 aa).

Residues 1 to 21 (MKGSAFAIILGLVVLCACSFA) form the signal peptide. Positions 22–53 (EDEQDQFASPNELLRSMFLESRHELIPEVEGR) are excised as a propeptide. 3 disulfides stabilise this stretch: Cys55/Cys69, Cys62/Cys74, and Cys68/Cys78. A Leucine amide modification is found at Leu82.

The protein belongs to the neurotoxin 30 (phrixotoxin) family. Expressed by the venom gland.

Its subcellular location is the secreted. Functionally, inhibits voltage-gated potassium channels of the subtype Kv4.1/KCND1 with high affinity and shows weak effects on Kv4.2/KCND2 and Kv2.1/KCNB1 subtypes. The toxin modifies the gating behavior of the channel and may interact with the S3-S4 extracellular loop. The polypeptide is Kappa-theraphotoxin-Cg2a (Chilobrachys guangxiensis (Chinese earth tiger tarantula)).